The primary structure comprises 152 residues: MTITDLVLILFIAALLAYALYDQFIMPRRNGPTLLSIALLRRGRVDSVIFVGLVAILIYNNVTSHGAQMTTWLLSALALMGFYIFWIRTPRIIFKQRGFFFANVWIEYNRIKEMNLSEDGVLVMQLEQRRLLIRVRNIDDLEKIYKILIENQ.

3 consecutive transmembrane segments (helical) span residues 6-26, 45-65, and 67-87; these read LVLI…QFIM, VDSV…VTSH, and AQMT…IFWI.

Belongs to the UPF0266 family.

The protein resides in the cell inner membrane. The chain is UPF0266 membrane protein YobD from Salmonella newport (strain SL254).